Reading from the N-terminus, the 204-residue chain is Large ribosomal subunit protein uL4 (204 aa).

The segment at 44–76 (RAGTHRTKGMGEISGTTKKPYRQKGTGSARQGS) is disordered.

It belongs to the universal ribosomal protein uL4 family. Part of the 50S ribosomal subunit.

Its function is as follows. One of the primary rRNA binding proteins, this protein initially binds near the 5'-end of the 23S rRNA. It is important during the early stages of 50S assembly. It makes multiple contacts with different domains of the 23S rRNA in the assembled 50S subunit and ribosome. Functionally, forms part of the polypeptide exit tunnel. This Gluconobacter oxydans (strain 621H) (Gluconobacter suboxydans) protein is Large ribosomal subunit protein uL4.